We begin with the raw amino-acid sequence, 366 residues long: Phospho-N-acetylmuramoyl-pentapeptide-transferase (366 aa).

A run of 10 helical transmembrane segments spans residues 3–23, 55–75, 80–100, 118–138, 161–181, 197–217, 238–258, 262–282, 290–310, and 341–361; these read QIII…PILI, IAII…SYFA, FTAS…TGFA, AKLI…LRFP, IAFG…YVVV, LAAG…FWQF, IAVL…WNAA, IFMG…ISVV, VIIG…IAVF, and FWLI…GDWL.

It belongs to the glycosyltransferase 4 family. MraY subfamily. The cofactor is Mg(2+).

Its subcellular location is the cell membrane. The catalysed reaction is UDP-N-acetyl-alpha-D-muramoyl-L-alanyl-gamma-D-glutamyl-meso-2,6-diaminopimeloyl-D-alanyl-D-alanine + di-trans,octa-cis-undecaprenyl phosphate = di-trans,octa-cis-undecaprenyl diphospho-N-acetyl-alpha-D-muramoyl-L-alanyl-D-glutamyl-meso-2,6-diaminopimeloyl-D-alanyl-D-alanine + UMP. It functions in the pathway cell wall biogenesis; peptidoglycan biosynthesis. Functionally, catalyzes the initial step of the lipid cycle reactions in the biosynthesis of the cell wall peptidoglycan: transfers peptidoglycan precursor phospho-MurNAc-pentapeptide from UDP-MurNAc-pentapeptide onto the lipid carrier undecaprenyl phosphate, yielding undecaprenyl-pyrophosphoryl-MurNAc-pentapeptide, known as lipid I. The polypeptide is Phospho-N-acetylmuramoyl-pentapeptide-transferase (Corynebacterium efficiens (strain DSM 44549 / YS-314 / AJ 12310 / JCM 11189 / NBRC 100395)).